A 100-amino-acid polypeptide reads, in one-letter code: Aspartyl/glutamyl-tRNA(Asn/Gln) amidotransferase subunit C (100 aa).

The protein belongs to the GatC family. As to quaternary structure, heterotrimer of A, B and C subunits.

The enzyme catalyses L-glutamyl-tRNA(Gln) + L-glutamine + ATP + H2O = L-glutaminyl-tRNA(Gln) + L-glutamate + ADP + phosphate + H(+). It carries out the reaction L-aspartyl-tRNA(Asn) + L-glutamine + ATP + H2O = L-asparaginyl-tRNA(Asn) + L-glutamate + ADP + phosphate + 2 H(+). In terms of biological role, allows the formation of correctly charged Asn-tRNA(Asn) or Gln-tRNA(Gln) through the transamidation of misacylated Asp-tRNA(Asn) or Glu-tRNA(Gln) in organisms which lack either or both of asparaginyl-tRNA or glutaminyl-tRNA synthetases. The reaction takes place in the presence of glutamine and ATP through an activated phospho-Asp-tRNA(Asn) or phospho-Glu-tRNA(Gln). This is Aspartyl/glutamyl-tRNA(Asn/Gln) amidotransferase subunit C from Streptococcus pneumoniae (strain P1031).